Consider the following 431-residue polypeptide: tRNA(Ile)-lysidine synthase (431 aa).

An ATP-binding site is contributed by 25 to 30 (SGGLDS).

Belongs to the tRNA(Ile)-lysidine synthase family.

The protein resides in the cytoplasm. It carries out the reaction cytidine(34) in tRNA(Ile2) + L-lysine + ATP = lysidine(34) in tRNA(Ile2) + AMP + diphosphate + H(+). Functionally, ligates lysine onto the cytidine present at position 34 of the AUA codon-specific tRNA(Ile) that contains the anticodon CAU, in an ATP-dependent manner. Cytidine is converted to lysidine, thus changing the amino acid specificity of the tRNA from methionine to isoleucine. This chain is tRNA(Ile)-lysidine synthase, found in Legionella pneumophila (strain Lens).